Here is a 250-residue protein sequence, read N- to C-terminus: 3-deoxy-manno-octulosonate cytidylyltransferase (250 aa).

Belongs to the KdsB family.

The protein resides in the cytoplasm. It catalyses the reaction 3-deoxy-alpha-D-manno-oct-2-ulosonate + CTP = CMP-3-deoxy-beta-D-manno-octulosonate + diphosphate. It functions in the pathway nucleotide-sugar biosynthesis; CMP-3-deoxy-D-manno-octulosonate biosynthesis; CMP-3-deoxy-D-manno-octulosonate from 3-deoxy-D-manno-octulosonate and CTP: step 1/1. Its pathway is bacterial outer membrane biogenesis; lipopolysaccharide biosynthesis. Functionally, activates KDO (a required 8-carbon sugar) for incorporation into bacterial lipopolysaccharide in Gram-negative bacteria. The protein is 3-deoxy-manno-octulosonate cytidylyltransferase of Syntrophobacter fumaroxidans (strain DSM 10017 / MPOB).